The sequence spans 893 residues: TBC domain-containing protein kinase-like protein (893 aa).

Positions methionine 1 to phenylalanine 273 constitute a Protein kinase domain. The Rab-GAP TBC domain occupies aspartate 466 to asparagine 651. Positions tyrosine 710–serine 749 are disordered. The segment covering serine 720–serine 729 has biased composition (low complexity). The 100-residue stretch at serine 790–proline 889 folds into the Rhodanese domain.

This sequence belongs to the protein kinase superfamily. As to quaternary structure, component of the FERRY complex composed of five subunits, TBCK, PPP1R21, FERRY3, CRYZL1 and GATD1 with a ratio of 1:2:1:2:4, respectively.

Its subcellular location is the cytoplasm. The protein resides in the cytoskeleton. The protein localises to the spindle. It is found in the midbody. It localises to the early endosome. Functionally, component of the FERRY complex (Five-subunit Endosomal Rab5 and RNA/ribosome intermediary). The FERRY complex directly interacts with mRNAs and RAB5A, and functions as a RAB5A effector involved in the localization and the distribution of specific mRNAs most likely by mediating their endosomal transport. The complex recruits mRNAs and ribosomes to early endosomes through direct mRNA-interaction. Also involved in the modulation of mTOR signaling and expression of mTOR complex components. Involved in the control of actin-cytoskeleton organization. The chain is TBC domain-containing protein kinase-like protein from Homo sapiens (Human).